The following is a 90-amino-acid chain: Small ribosomal subunit protein bS20 (90 aa).

A disordered region spans residues 1–28 (MPNTSSASKRLRQNEKRRLLNRATRSNM).

Belongs to the bacterial ribosomal protein bS20 family.

Its function is as follows. Binds directly to 16S ribosomal RNA. This is Small ribosomal subunit protein bS20 from Rhodopirellula baltica (strain DSM 10527 / NCIMB 13988 / SH1).